We begin with the raw amino-acid sequence, 276 residues long: NH(3)-dependent NAD(+) synthetase (276 aa).

ATP is bound at residue 43–50 (GISGGVDS). Mg(2+) is bound at residue D49. R146 is a binding site for deamido-NAD(+). T166 lines the ATP pocket. Position 171 (E171) interacts with Mg(2+). Positions 179 and 186 each coordinate deamido-NAD(+). Residues K195 and T217 each coordinate ATP. 266–267 (HK) contributes to the deamido-NAD(+) binding site.

It belongs to the NAD synthetase family. In terms of assembly, homodimer.

It carries out the reaction deamido-NAD(+) + NH4(+) + ATP = AMP + diphosphate + NAD(+) + H(+). It participates in cofactor biosynthesis; NAD(+) biosynthesis; NAD(+) from deamido-NAD(+) (ammonia route): step 1/1. In terms of biological role, catalyzes the ATP-dependent amidation of deamido-NAD to form NAD. Uses ammonia as a nitrogen source. This chain is NH(3)-dependent NAD(+) synthetase, found in Aliivibrio fischeri (strain ATCC 700601 / ES114) (Vibrio fischeri).